We begin with the raw amino-acid sequence, 91 residues long: MNNALGLVETKGLVGAIEAADAMVKSANVQLVGYEKIGSGLVTVMVRGDVGAVKAAVDAGSAAASVVGEVKSCHVIPRPHSDVEAILPKSA.

One can recognise a BMC domain in the interval 4 to 88; sequence ALGLVETKGL…PHSDVEAILP (85 aa).

Belongs to the bacterial microcompartments protein family. As to quaternary structure, homohexamer with a central pore of about 5.7 Angstroms in diameter. Interacts with PduP, which targets PduP to the BMC.

Its subcellular location is the bacterial microcompartment. It participates in polyol metabolism; 1,2-propanediol degradation. Functionally, one of the major shell proteins of the bacterial microcompartment (BMC) dedicated to 1,2-propanediol (1,2-PD) degradation. The isolated BMC shell component protein ratio for J:A:B':B:K:T:U is approximately 15:10:7:6:1:1:2. At least one of PduA or PduJ is required for BMC assembly; it must be encoded as the first gene in the pdu operon. Required for structural integrity of BMCs and to mitigate propionaldehyde toxicity, probably joins facets responsible for BMC closure. Edge residues (particularly Lys-25) are important for function and assembly of the BMC. 80% identical to PduA; although their pore regions appear structurally identical, unlike PduA plays no role in 1,2-PD diffusion into or out of the BMC shell. If pduJ is cloned in the chromosomal position of pduA it is able to complement a pduA deletion; it then has a functional pore as it assumes the transport functions of PduA. Overexpression of this protein leads to aberrant filaments that extend the length of the cell, cross the cleavage furrow and impair division. The filaments form nanotubes with a hollow center. Modeling suggests PduJ is probably the hub for binding multiple enzymes to the interior of the BMC; modeling suggests PduC, PduD, PduG and PduM are targeted to PduJ. In terms of biological role, the 1,2-propanediol (1,2-PD) degradation bacterial microcompartment (BMC) concentrates low levels of 1,2-PD catabolic enzymes, concentrates volatile reaction intermediates thus enhancing pathway flux and keeps the level of toxic, mutagenic propionaldehyde low. The chain is Bacterial microcompartment shell protein PduJ from Salmonella typhimurium (strain LT2 / SGSC1412 / ATCC 700720).